The following is a 112-amino-acid chain: 2Fe-2S ferredoxin (112 aa).

The 2Fe-2S ferredoxin-type domain maps to 5 to 107 (IKVTFIINDG…GIKVRIPATT (103 aa)). [2Fe-2S] cluster is bound by residues Cys-42, Cys-48, Cys-51, and Cys-88.

It belongs to the adrenodoxin/putidaredoxin family. Requires [2Fe-2S] cluster as cofactor.

Ferredoxin are iron-sulfur proteins that transfer electrons in a wide variety of metabolic reactions. This chain is 2Fe-2S ferredoxin (fdxB), found in Rickettsia conorii (strain ATCC VR-613 / Malish 7).